Reading from the N-terminus, the 83-residue chain is UPF0297 protein LCK_00468 (83 aa).

Belongs to the UPF0297 family.

This chain is UPF0297 protein LCK_00468, found in Leuconostoc citreum (strain KM20).